A 448-amino-acid polypeptide reads, in one-letter code: Signal recognition particle 54 kDa protein (448 aa).

GTP contacts are provided by residues 107–114 (GIQGSGKT), 189–193 (DSAGR), and 247–250 (TKLD).

Belongs to the GTP-binding SRP family. SRP54 subfamily. In terms of assembly, part of the signal recognition particle protein translocation system, which is composed of SRP and FtsY. Archaeal SRP consists of a 7S RNA molecule of 300 nucleotides and two protein subunits: SRP54 and SRP19.

Its subcellular location is the cytoplasm. The enzyme catalyses GTP + H2O = GDP + phosphate + H(+). Functionally, involved in targeting and insertion of nascent membrane proteins into the cytoplasmic membrane. Binds to the hydrophobic signal sequence of the ribosome-nascent chain (RNC) as it emerges from the ribosomes. The SRP-RNC complex is then targeted to the cytoplasmic membrane where it interacts with the SRP receptor FtsY. The protein is Signal recognition particle 54 kDa protein of Thermococcus onnurineus (strain NA1).